A 302-amino-acid chain; its full sequence is Quinolinate synthase (302 aa).

Residues H24 and S41 each contribute to the iminosuccinate site. C86 contacts [4Fe-4S] cluster. Iminosuccinate-binding positions include Y112–N114 and S129. C171 is a [4Fe-4S] cluster binding site. Residues H197–E199 and T214 contribute to the iminosuccinate site. Position 259 (C259) interacts with [4Fe-4S] cluster.

Belongs to the quinolinate synthase family. Type 2 subfamily. It depends on [4Fe-4S] cluster as a cofactor.

The protein localises to the cytoplasm. It catalyses the reaction iminosuccinate + dihydroxyacetone phosphate = quinolinate + phosphate + 2 H2O + H(+). The protein operates within cofactor biosynthesis; NAD(+) biosynthesis; quinolinate from iminoaspartate: step 1/1. In terms of biological role, catalyzes the condensation of iminoaspartate with dihydroxyacetone phosphate to form quinolinate. The protein is Quinolinate synthase of Dehalococcoides mccartyi (strain ATCC BAA-2100 / JCM 16839 / KCTC 5957 / BAV1).